A 253-amino-acid polypeptide reads, in one-letter code: Adenosylcobinamide-GDP ribazoletransferase (253 aa).

The next 7 helical transmembrane spans lie at 33–53 (ISPLIIGISLALIESAVYVLL), 56–76 (ILEALAGIVLLGVVELLRGFN), 106–126 (IGSGGIGLLLVYLSIQIVALL), 132–152 (FYTIFYLISSNVLSMTIGLYI), 178–198 (VLLFELIPFISLYNIIVFLVF), 209–229 (LGGSSGDIAGASITLSFPLFL), and 233–253 (EITNLNYSLLSILCYLFLYLH).

Belongs to the CobS family. Requires Mg(2+) as cofactor.

The protein resides in the cell membrane. It carries out the reaction alpha-ribazole + adenosylcob(III)inamide-GDP = adenosylcob(III)alamin + GMP + H(+). It catalyses the reaction alpha-ribazole 5'-phosphate + adenosylcob(III)inamide-GDP = adenosylcob(III)alamin 5'-phosphate + GMP + H(+). The protein operates within cofactor biosynthesis; adenosylcobalamin biosynthesis; adenosylcobalamin from cob(II)yrinate a,c-diamide: step 7/7. Its function is as follows. Joins adenosylcobinamide-GDP and alpha-ribazole to generate adenosylcobalamin (Ado-cobalamin). Also synthesizes adenosylcobalamin 5'-phosphate from adenosylcobinamide-GDP and alpha-ribazole 5'-phosphate. This Saccharolobus islandicus (strain M.16.27) (Sulfolobus islandicus) protein is Adenosylcobinamide-GDP ribazoletransferase.